The following is a 63-amino-acid chain: DNA-directed RNA polymerase 7 kDa subunit (63 aa).

It belongs to the poxviridae DNA-directed RNA polymerase 7 kDa subunit family. In terms of assembly, the DNA-dependent RNA polymerase used for intermediate and late genes expression consists of eight subunits 147 kDa, 133 kDa, 35 kDa, 30 kDa, 22 kDa, 19 kDa, 18 kDa and 7 kDa totalling more than 500 kDa in mass. The same holoenzyme, with the addition of the transcription-specificity factor RAP94, is used for early gene expression.

It is found in the virion. It carries out the reaction RNA(n) + a ribonucleoside 5'-triphosphate = RNA(n+1) + diphosphate. Functionally, part of the DNA-dependent RNA polymerase which catalyzes the transcription of viral DNA into RNA using the four ribonucleoside triphosphates as substrates. Responsible for the transcription of early, intermediate and late genes. DNA-dependent RNA polymerase associates with the early transcription factor (ETF) thereby allowing the early genes transcription. Late transcription, and probably also intermediate transcription, require newly synthesized RNA polymerase. The chain is DNA-directed RNA polymerase 7 kDa subunit (RPO7) from Fowlpox virus (strain NVSL) (FPV).